Reading from the N-terminus, the 229-residue chain is Demethylmenaquinone methyltransferase (229 aa).

Residues Thr-57, Asp-77, and 101–102 (DV) contribute to the S-adenosyl-L-methionine site.

It belongs to the class I-like SAM-binding methyltransferase superfamily. MenG/UbiE family.

The enzyme catalyses a 2-demethylmenaquinol + S-adenosyl-L-methionine = a menaquinol + S-adenosyl-L-homocysteine + H(+). It functions in the pathway quinol/quinone metabolism; menaquinone biosynthesis; menaquinol from 1,4-dihydroxy-2-naphthoate: step 2/2. Methyltransferase required for the conversion of demethylmenaquinol (DMKH2) to menaquinol (MKH2). The chain is Demethylmenaquinone methyltransferase from Chlamydia trachomatis serovar A (strain ATCC VR-571B / DSM 19440 / HAR-13).